An 836-amino-acid polypeptide reads, in one-letter code: DNA gyrase subunit A (836 aa).

The Topo IIA-type catalytic domain maps to 34–500 (LPDARDGLKP…AGDVRDIEDI (467 aa)). Tyrosine 122 serves as the catalytic O-(5'-phospho-DNA)-tyrosine intermediate. The short motif at 527–533 (QKRGGQG) is the GyrA-box element.

It belongs to the type II topoisomerase GyrA/ParC subunit family. Heterotetramer, composed of two GyrA and two GyrB chains. In the heterotetramer, GyrA contains the active site tyrosine that forms a transient covalent intermediate with DNA, while GyrB binds cofactors and catalyzes ATP hydrolysis.

The protein resides in the cytoplasm. It carries out the reaction ATP-dependent breakage, passage and rejoining of double-stranded DNA.. In terms of biological role, a type II topoisomerase that negatively supercoils closed circular double-stranded (ds) DNA in an ATP-dependent manner to modulate DNA topology and maintain chromosomes in an underwound state. Negative supercoiling favors strand separation, and DNA replication, transcription, recombination and repair, all of which involve strand separation. Also able to catalyze the interconversion of other topological isomers of dsDNA rings, including catenanes and knotted rings. Type II topoisomerases break and join 2 DNA strands simultaneously in an ATP-dependent manner. The sequence is that of DNA gyrase subunit A from Chlamydia trachomatis serovar D (strain ATCC VR-885 / DSM 19411 / UW-3/Cx).